A 515-amino-acid chain; its full sequence is AAA ATPase forming ring-shaped complexes (515 aa).

Residues Asn2 to Gly49 adopt a coiled-coil conformation. An ATP-binding site is contributed by Gly240–Leu245.

The protein belongs to the AAA ATPase family. Homohexamer. Assembles into a hexameric ring structure.

The sequence is that of AAA ATPase forming ring-shaped complexes from Bifidobacterium adolescentis (strain ATCC 15703 / DSM 20083 / NCTC 11814 / E194a).